A 707-amino-acid polypeptide reads, in one-letter code: Elongation factor G (707 aa).

Positions 8–296 constitute a tr-type G domain; sequence ERYRNFGIMA…AVVDFLPAPT (289 aa). Residues 17 to 24, 94 to 98, and 148 to 151 contribute to the GTP site; these read AHIDAGKT, DTPGH, and NKMD.

The protein belongs to the TRAFAC class translation factor GTPase superfamily. Classic translation factor GTPase family. EF-G/EF-2 subfamily.

It localises to the cytoplasm. In terms of biological role, catalyzes the GTP-dependent ribosomal translocation step during translation elongation. During this step, the ribosome changes from the pre-translocational (PRE) to the post-translocational (POST) state as the newly formed A-site-bound peptidyl-tRNA and P-site-bound deacylated tRNA move to the P and E sites, respectively. Catalyzes the coordinated movement of the two tRNA molecules, the mRNA and conformational changes in the ribosome. This chain is Elongation factor G, found in Paracoccus denitrificans (strain Pd 1222).